The following is a 305-amino-acid chain: tRNA pseudouridine synthase B (305 aa).

The active-site Nucleophile is D48.

It belongs to the pseudouridine synthase TruB family. Type 1 subfamily.

The enzyme catalyses uridine(55) in tRNA = pseudouridine(55) in tRNA. Functionally, responsible for synthesis of pseudouridine from uracil-55 in the psi GC loop of transfer RNAs. This is tRNA pseudouridine synthase B from Pseudomonas fluorescens (strain ATCC BAA-477 / NRRL B-23932 / Pf-5).